A 224-amino-acid chain; its full sequence is Putative ribonuclease Z (224 aa).

Zn(2+) contacts are provided by aspartate 120 and histidine 184.

It belongs to the RNase Z family. Homodimer. Zn(2+) is required as a cofactor.

It carries out the reaction Endonucleolytic cleavage of RNA, removing extra 3' nucleotides from tRNA precursor, generating 3' termini of tRNAs. A 3'-hydroxy group is left at the tRNA terminus and a 5'-phosphoryl group is left at the trailer molecule.. Functionally, zinc phosphodiesterase, which displays some tRNA 3'-processing endonuclease activity. Probably involved in tRNA maturation, by removing a 3'-trailer from precursor tRNA. The polypeptide is Putative ribonuclease Z (rnz) (Mycobacterium tuberculosis (strain CDC 1551 / Oshkosh)).